The following is a 128-amino-acid chain: uncharacterized protein (128 aa).

The disordered stretch occupies residues 1–26; sequence MNSATSETTTNTGAAETTTSTGAAET. The chain crosses the membrane as a helical span at residues 105–127; the sequence is IANGLLTNNGISVFISTVLLAIV.

It belongs to the flocculin family.

It localises to the membrane. This is an uncharacterized protein from Saccharomyces cerevisiae (strain ATCC 204508 / S288c) (Baker's yeast).